We begin with the raw amino-acid sequence, 409 residues long: Galactosylgalactosylxylosylprotein 3-beta-glucuronosyltransferase S (409 aa).

The interval 1-45 (MSSARLLESQTSDEDNEDIERRPHQSHSRSCSNNTTPTHPPHPMV) is disordered. At 1 to 53 (MSSARLLESQTSDEDNEDIERRPHQSHSRSCSNNTTPTHPPHPMVRKGGVARR) the chain is on the cytoplasmic side. Phosphoserine is present on Ser-9. Thr-11 carries the post-translational modification Phosphothreonine. Residues Ser-12 and Ser-32 each carry the phosphoserine modification. Residues 54-73 (ICLIGGALFLLLVALCYLTL) form a helical; Signal-anchor for type II membrane protein membrane-spanning segment. The Lumenal segment spans residues 74 to 409 (SGDTRLGGSE…RENPHSKILS (336 aa)). N-linked (GlcNAc...) asparagine glycosylation is found at Asn-102 and Asn-223. A Mn(2+)-binding site is contributed by Asp-235. Catalysis depends on Glu-318, which acts as the Proton acceptor. A glycan (N-linked (GlcNAc...) asparagine) is linked at Asn-338. The tract at residues 389–409 (EGRNALISKNGRENPHSKILS) is disordered. The segment covering 398 to 409 (NGRENPHSKILS) has biased composition (basic and acidic residues).

The protein belongs to the glycosyltransferase 43 family. Mn(2+) serves as cofactor.

It localises to the golgi apparatus membrane. It catalyses the reaction 3-O-(beta-D-galactosyl-(1-&gt;3)-beta-D-galactosyl-(1-&gt;4)-beta-D-xylosyl)-L-seryl-[protein] + UDP-alpha-D-glucuronate = 3-O-(beta-D-GlcA-(1-&gt;3)-beta-D-Gal-(1-&gt;3)-beta-D-Gal-(1-&gt;4)-beta-D-Xyl)-L-seryl-[protein] + UDP + H(+). It participates in protein modification; protein glycosylation. Functionally, involved in the biosynthesis of L2/HNK-1 carbohydrate epitope on both glycolipids and glycoproteins. Enzyme has a broad specificity. The sequence is that of Galactosylgalactosylxylosylprotein 3-beta-glucuronosyltransferase S (GlcAT-S) from Drosophila melanogaster (Fruit fly).